A 364-amino-acid chain; its full sequence is DNA replication and repair protein RecF (364 aa).

30-37 (GKNAQGKT) provides a ligand contact to ATP.

Belongs to the RecF family.

It is found in the cytoplasm. Its function is as follows. The RecF protein is involved in DNA metabolism; it is required for DNA replication and normal SOS inducibility. RecF binds preferentially to single-stranded, linear DNA. It also seems to bind ATP. This is DNA replication and repair protein RecF from Geotalea uraniireducens (strain Rf4) (Geobacter uraniireducens).